Reading from the N-terminus, the 258-residue chain is uncharacterized protein (258 aa).

This is an uncharacterized protein from Mycobacterium tuberculosis (strain CDC 1551 / Oshkosh).